The sequence spans 222 residues: 7-cyano-7-deazaguanine synthase (222 aa).

11–21 contacts ATP; the sequence is FSGGQDSTTCL. Zn(2+) is bound by residues C187, C195, C198, and C201.

Belongs to the QueC family. Zn(2+) serves as cofactor.

It carries out the reaction 7-carboxy-7-deazaguanine + NH4(+) + ATP = 7-cyano-7-deazaguanine + ADP + phosphate + H2O + H(+). The protein operates within purine metabolism; 7-cyano-7-deazaguanine biosynthesis. Functionally, catalyzes the ATP-dependent conversion of 7-carboxy-7-deazaguanine (CDG) to 7-cyano-7-deazaguanine (preQ(0)). This chain is 7-cyano-7-deazaguanine synthase, found in Actinobacillus pleuropneumoniae serotype 7 (strain AP76).